The primary structure comprises 364 residues: DNA replication and repair protein RecF (364 aa).

30 to 37 (GKNAQGKT) is a binding site for ATP.

The protein belongs to the RecF family.

The protein localises to the cytoplasm. Functionally, the RecF protein is involved in DNA metabolism; it is required for DNA replication and normal SOS inducibility. RecF binds preferentially to single-stranded, linear DNA. It also seems to bind ATP. The chain is DNA replication and repair protein RecF from Geotalea uraniireducens (strain Rf4) (Geobacter uraniireducens).